Consider the following 924-residue polypeptide: Protein SMAX1-LIKE 2 (924 aa).

One can recognise a Clp R domain in the interval 8-181; sequence IQQTLTPEAA…SAIEQSLIGN (174 aa). The repeat 1 stretch occupies residues 12–83; the sequence is LTPEAATVLN…LCFSVALERL (72 aa). The span at 86 to 105 shows a compositional bias: low complexity; it reads TSTTTTTTSSSSSSSPSQTQ. Residues 86–107 are disordered; that stretch reads TSTTTTTTSSSSSSSPSQTQEP. Residues 109 to 181 are repeat 2; the sequence is LSNALTAALK…SAIEQSLIGN (73 aa). Positions 522–552 are disordered; sequence TRSDITPPGSPVGTDLVLGRPNRGLSSPEKK. Residues 780-784 carry the EAR motif; that stretch reads FDLNE.

Belongs to the ClpA/ClpB family. In terms of assembly, interacts probably with TPL/TPR in an EAR-motif dependent manner. As to expression, expressed in seedlings and leaves. Detected in roots and axillary branches.

Its function is as follows. Probable component of a transcriptional corepressor complex that acts specifically in the karrikin pathway. Controls seedling growth redundantly with SMAX1, but is not involved in leaf morphology, shoot branching or germination control. The chain is Protein SMAX1-LIKE 2 from Arabidopsis thaliana (Mouse-ear cress).